The primary structure comprises 600 residues: Zinc metalloproteinase-disintegrin-like cobrin (600 aa).

An N-terminal signal peptide occupies residues 1–8 (MIQLSWSS). Residues 9–179 (IILESGNVND…DEPIKKTSLL (171 aa)) constitute a propeptide that is removed on maturation. A Peptidase M12B domain is found at 193 to 388 (KYIEFYMVVD…DRPQCILNKP (196 aa)). 2 residues coordinate Ca(2+): E196 and D280. Intrachain disulfides connect C304–C383, C344–C367, and C346–C351. H329, H333, and H339 together coordinate Zn(2+). Positions 383, 386, 398, 401, 403, 405, 408, and 411 each coordinate Ca(2+). The region spanning 396–482 (PPICGNYFVE…ECPTDVFQRN (87 aa)) is the Disintegrin domain. Cystine bridges form between C399-C428, C410-C423, C412-C418, C422-C445, C436-C442, C441-C467, C454-C474, C461-C492, C486-C497, C504-C554, C519-C562, C532-C542, C549-C588, and C582-C593. N-linked (GlcNAc...) asparagine glycosylation is present at N424. The short motif at 460 to 462 (DCD) is the D/ECD-tripeptide element. The Ca(2+) site is built by D462, L463, E465, D477, and V478.

This sequence belongs to the venom metalloproteinase (M12B) family. P-III subfamily. P-IIIa sub-subfamily. Monomer. Requires Zn(2+) as cofactor. In terms of tissue distribution, expressed by the venom gland.

Its subcellular location is the secreted. Its function is as follows. Snake venom zinc metalloproteinase that may cleave complement protein C3 into C3c-like (C3o). In Naja kaouthia (Monocled cobra), this protein is Zinc metalloproteinase-disintegrin-like cobrin.